We begin with the raw amino-acid sequence, 365 residues long: DNA repair protein rhp51 (365 aa).

Positions 1 to 25 are disordered; the sequence is MADTEVEMQVSAADTNNNENGQAQS. Residues 12-25 show a composition bias toward polar residues; it reads AADTNNNENGQAQS. Position 149-156 (149-156) interacts with ATP; it reads GEFRTGKS.

It belongs to the RecA family. RAD51 subfamily. In terms of assembly, interacts with rad22, rad54, rdh54, rhp54, rti1, swi2 and swi5. Forms homooiligomers.

The protein localises to the nucleus. In terms of biological role, required both for recombination and for the repair of DNA damage caused by X-rays. Binds to single and double-stranded DNA, in the presence of magnesium, and exhibits DNA-dependent ATPase activity. Promotes DNA strand annealing and strand exchange via DNA recombinase activity and forms helical nucleoprotein filaments. This chain is DNA repair protein rhp51 (rhp51), found in Schizosaccharomyces pombe (strain 972 / ATCC 24843) (Fission yeast).